The chain runs to 200 residues: dITP/XTP pyrophosphatase (200 aa).

Residue 19–24 (TSNAGK) coordinates substrate. Mg(2+) is bound by residues Glu-49 and Asp-78. The active-site Proton acceptor is Asp-78. Substrate-binding positions include Ser-79, 158–161 (FGYD), Lys-181, and 186–187 (HR).

It belongs to the HAM1 NTPase family. Homodimer. Mg(2+) serves as cofactor.

It catalyses the reaction XTP + H2O = XMP + diphosphate + H(+). It carries out the reaction dITP + H2O = dIMP + diphosphate + H(+). The catalysed reaction is ITP + H2O = IMP + diphosphate + H(+). In terms of biological role, pyrophosphatase that catalyzes the hydrolysis of nucleoside triphosphates to their monophosphate derivatives, with a high preference for the non-canonical purine nucleotides XTP (xanthosine triphosphate), dITP (deoxyinosine triphosphate) and ITP. Seems to function as a house-cleaning enzyme that removes non-canonical purine nucleotides from the nucleotide pool, thus preventing their incorporation into DNA/RNA and avoiding chromosomal lesions. In Deinococcus radiodurans (strain ATCC 13939 / DSM 20539 / JCM 16871 / CCUG 27074 / LMG 4051 / NBRC 15346 / NCIMB 9279 / VKM B-1422 / R1), this protein is dITP/XTP pyrophosphatase.